The primary structure comprises 308 residues: NADH-cytochrome b5 reductase 1 (308 aa).

Residues 10–27 form a helical membrane-spanning segment; the sequence is INGVYIPSALLIFGTTII. Residues 59–164 form the FAD-binding FR-type domain; sequence TEFQNFVLKD…RGPKGAMVYT (106 aa). Residues 144-159 and 170-207 each bind FAD; these read TTLR…GPKG and HIGM…QIDL.

It belongs to the flavoprotein pyridine nucleotide cytochrome reductase family. In terms of assembly, monomer. Component of the 2-(3-amino-3-carboxypropyl)histidine synthase complex composed of DPH1, DPH2, DPH3 and a NADH-dependent reductase, predominantly CBR1. Requires FAD as cofactor.

It localises to the mitochondrion outer membrane. The catalysed reaction is 2 Fe(III)-[cytochrome b5] + NADH = 2 Fe(II)-[cytochrome b5] + NAD(+) + H(+). The enzyme catalyses 2 Fe(3+)-[Dph3] + NADH = 2 Fe(2+)-[Dph3] + NAD(+) + H(+). It participates in protein modification; peptidyl-diphthamide biosynthesis. In terms of biological role, NADH-dependent reductase for DPH3 and cytochrome b5. Required for the first step of diphthamide biosynthesis, a post-translational modification of histidine which occurs in elongation factor 2. DPH1 and DPH2 transfer a 3-amino-3-carboxypropyl (ACP) group from S-adenosyl-L-methionine (SAM) to a histidine residue, the reaction is assisted by a reduction system comprising DPH3 and a NADH-dependent reductase, predominantly CBR1. By reducing DPH3, also involved in the formation of the tRNA wobble base modification mcm5s 2U (5-methoxycarbonylmethyl-2-thiouridine), mediated by the elongator complex. The cytochrome b5/NADH cytochrome b5 reductase electron transfer system supports the catalytic activity of several sterol biosynthetic enzymes. This Coccidioides immitis (strain RS) (Valley fever fungus) protein is NADH-cytochrome b5 reductase 1 (CBR1).